The sequence spans 463 residues: Kynureninase 2 (463 aa).

Pyridoxal 5'-phosphate is bound by residues leucine 134, threonine 135, 162 to 165 (FPSD), aspartate 247, histidine 250, and tyrosine 272. At lysine 273 the chain carries N6-(pyridoxal phosphate)lysine. Tryptophan 312 and asparagine 340 together coordinate pyridoxal 5'-phosphate.

It belongs to the kynureninase family. As to quaternary structure, homodimer. Pyridoxal 5'-phosphate serves as cofactor.

It localises to the cytoplasm. The enzyme catalyses L-kynurenine + H2O = anthranilate + L-alanine + H(+). It catalyses the reaction 3-hydroxy-L-kynurenine + H2O = 3-hydroxyanthranilate + L-alanine + H(+). It participates in amino-acid degradation; L-kynurenine degradation; L-alanine and anthranilate from L-kynurenine: step 1/1. Its pathway is cofactor biosynthesis; NAD(+) biosynthesis; quinolinate from L-kynurenine: step 2/3. In terms of biological role, catalyzes the cleavage of L-kynurenine (L-Kyn) and L-3-hydroxykynurenine (L-3OHKyn) into anthranilic acid (AA) and 3-hydroxyanthranilic acid (3-OHAA), respectively. This chain is Kynureninase 2 (bna5-2), found in Aspergillus niger (strain ATCC MYA-4892 / CBS 513.88 / FGSC A1513).